The sequence spans 726 residues: Catalase-peroxidase (726 aa).

The segment at residues 96 to 224 (WHSAGTYRIA…LAAVMMGLIY (129 aa)) is a cross-link (tryptophyl-tyrosyl-methioninium (Trp-Tyr) (with M-250)). The active-site Proton acceptor is His97. The tryptophyl-tyrosyl-methioninium (Tyr-Met) (with W-96) cross-link spans 224–250 (YVNPEGVDGKPDPLKTAHDMRVTFARM). His265 is a heme b binding site.

It belongs to the peroxidase family. Peroxidase/catalase subfamily. In terms of assembly, homodimer or homotetramer. Requires heme b as cofactor. Post-translationally, formation of the three residue Trp-Tyr-Met cross-link is important for the catalase, but not the peroxidase activity of the enzyme.

It catalyses the reaction H2O2 + AH2 = A + 2 H2O. The catalysed reaction is 2 H2O2 = O2 + 2 H2O. In terms of biological role, bifunctional enzyme with both catalase and broad-spectrum peroxidase activity. The protein is Catalase-peroxidase of Vibrio campbellii (strain ATCC BAA-1116).